A 212-amino-acid chain; its full sequence is Uracil phosphoribosyltransferase (212 aa).

Residues arginine 78, arginine 103, and 130 to 138 contribute to the 5-phospho-alpha-D-ribose 1-diphosphate site; that span reads DPMLATGGS. Residues isoleucine 193 and 198–200 each bind uracil; that span reads GDA. Aspartate 199 serves as a coordination point for 5-phospho-alpha-D-ribose 1-diphosphate.

The protein belongs to the UPRTase family. The cofactor is Mg(2+).

It catalyses the reaction UMP + diphosphate = 5-phospho-alpha-D-ribose 1-diphosphate + uracil. It participates in pyrimidine metabolism; UMP biosynthesis via salvage pathway; UMP from uracil: step 1/1. With respect to regulation, allosterically activated by GTP. In terms of biological role, catalyzes the conversion of uracil and 5-phospho-alpha-D-ribose 1-diphosphate (PRPP) to UMP and diphosphate. The chain is Uracil phosphoribosyltransferase from Pseudomonas entomophila (strain L48).